A 162-amino-acid chain; its full sequence is Large ribosomal subunit protein uL30 (162 aa).

The protein belongs to the universal ribosomal protein uL30 family. Part of the 50S ribosomal subunit.

The sequence is that of Large ribosomal subunit protein uL30 from Staphylothermus marinus (strain ATCC 43588 / DSM 3639 / JCM 9404 / F1).